The primary structure comprises 307 residues: Ribonuclease Z (307 aa).

Zn(2+)-binding residues include His-63, His-65, Asp-67, His-68, His-140, Asp-211, and His-269. Catalysis depends on Asp-67, which acts as the Proton acceptor.

Belongs to the RNase Z family. As to quaternary structure, homodimer. Zn(2+) serves as cofactor.

It carries out the reaction Endonucleolytic cleavage of RNA, removing extra 3' nucleotides from tRNA precursor, generating 3' termini of tRNAs. A 3'-hydroxy group is left at the tRNA terminus and a 5'-phosphoryl group is left at the trailer molecule.. Zinc phosphodiesterase, which displays some tRNA 3'-processing endonuclease activity. Probably involved in tRNA maturation, by removing a 3'-trailer from precursor tRNA. The polypeptide is Ribonuclease Z (Geobacillus kaustophilus (strain HTA426)).